Here is a 432-residue protein sequence, read N- to C-terminus: UDP-N-acetylmuramoylalanine--D-glutamate ligase (432 aa).

Position 98-104 (98-104) interacts with ATP; that stretch reads GTNGKST.

It belongs to the MurCDEF family.

It localises to the cytoplasm. The catalysed reaction is UDP-N-acetyl-alpha-D-muramoyl-L-alanine + D-glutamate + ATP = UDP-N-acetyl-alpha-D-muramoyl-L-alanyl-D-glutamate + ADP + phosphate + H(+). It participates in cell wall biogenesis; peptidoglycan biosynthesis. Functionally, cell wall formation. Catalyzes the addition of glutamate to the nucleotide precursor UDP-N-acetylmuramoyl-L-alanine (UMA). This Fusobacterium nucleatum subsp. nucleatum (strain ATCC 25586 / DSM 15643 / BCRC 10681 / CIP 101130 / JCM 8532 / KCTC 2640 / LMG 13131 / VPI 4355) protein is UDP-N-acetylmuramoylalanine--D-glutamate ligase.